We begin with the raw amino-acid sequence, 223 residues long: Urease accessory protein UreF (223 aa).

The protein belongs to the UreF family. As to quaternary structure, ureD, UreF and UreG form a complex that acts as a GTP-hydrolysis-dependent molecular chaperone, activating the urease apoprotein by helping to assemble the nickel containing metallocenter of UreC. The UreE protein probably delivers the nickel.

The protein localises to the cytoplasm. In terms of biological role, required for maturation of urease via the functional incorporation of the urease nickel metallocenter. This is Urease accessory protein UreF from Rhizobium leguminosarum bv. viciae.